Reading from the N-terminus, the 227-residue chain is Translation initiation factor 6 (227 aa).

This sequence belongs to the eIF-6 family.

Binds to the 50S ribosomal subunit and prevents its association with the 30S ribosomal subunit to form the 70S initiation complex. In Pyrococcus horikoshii (strain ATCC 700860 / DSM 12428 / JCM 9974 / NBRC 100139 / OT-3), this protein is Translation initiation factor 6.